A 455-amino-acid polypeptide reads, in one-letter code: ADP-dependent glucose/glucosamine kinase (455 aa).

An ADPK domain is found at 2-455; that stretch reads PTWEELYKNA…AFIGEFSFTL (454 aa). Residues D34, E88, 112–113, and H176 each bind D-glucose; that span reads GQ. E195 lines the ADP pocket. E266 contributes to the Mg(2+) binding site. Residue N292 coordinates ADP. E295 contacts Mg(2+). ADP-binding positions include 342-343, V429, and G439; that span reads HT. Residue D440 coordinates D-glucose. D440 serves as a coordination point for Mg(2+). D440 functions as the Proton acceptor in the catalytic mechanism.

It belongs to the ADP-dependent glucokinase family. Homodimer. It depends on Mg(2+) as a cofactor.

It is found in the cytoplasm. The enzyme catalyses D-glucose + ADP = D-glucose 6-phosphate + AMP + H(+). The catalysed reaction is D-glucosamine + ADP = D-glucosamine 6-phosphate + AMP + H(+). Its pathway is carbohydrate degradation; glycolysis. Its function is as follows. Catalyzes the ADP-dependent phosphorylation of D-glucose to D-glucose 6-phosphate and glucosamine to glucosamine 6-phosphate. Can also use CDP as the phosphoryl group donor and D-1,5-anhydroglucitol as the phosphoryl group acceptor. The chain is ADP-dependent glucose/glucosamine kinase from Pyrococcus furiosus (strain ATCC 43587 / DSM 3638 / JCM 8422 / Vc1).